Consider the following 110-residue polypeptide: Large ribosomal subunit protein uL22 (110 aa).

This sequence belongs to the universal ribosomal protein uL22 family. In terms of assembly, part of the 50S ribosomal subunit.

In terms of biological role, this protein binds specifically to 23S rRNA; its binding is stimulated by other ribosomal proteins, e.g. L4, L17, and L20. It is important during the early stages of 50S assembly. It makes multiple contacts with different domains of the 23S rRNA in the assembled 50S subunit and ribosome. Functionally, the globular domain of the protein is located near the polypeptide exit tunnel on the outside of the subunit, while an extended beta-hairpin is found that lines the wall of the exit tunnel in the center of the 70S ribosome. The chain is Large ribosomal subunit protein uL22 from Hydrogenovibrio crunogenus (strain DSM 25203 / XCL-2) (Thiomicrospira crunogena).